Consider the following 400-residue polypeptide: Ubiquitin-like modifier-activating enzyme 5 (400 aa).

Gly76, Asp97, Lys120, Asn143, and Asn177 together coordinate ATP. The Zn(2+) site is built by Cys219 and Cys222. Catalysis depends on Cys243, which acts as the Glycyl thioester intermediate. Cys296 and Cys301 together coordinate Zn(2+).

The protein belongs to the ubiquitin-activating E1 family. UBA5 subfamily.

Its function is as follows. E1-like enzyme which activates UFM1. In Drosophila virilis (Fruit fly), this protein is Ubiquitin-like modifier-activating enzyme 5.